The following is a 563-amino-acid chain: NAD-dependent malic enzyme (563 aa).

Tyr-101 serves as the catalytic Proton donor. Arg-154 is a binding site for NAD(+). The Proton acceptor role is filled by Lys-172. A divalent metal cation contacts are provided by Glu-243, Asp-244, and Asp-267. Residues Asp-267 and Asn-416 each coordinate NAD(+).

It belongs to the malic enzymes family. Homotetramer. Mg(2+) is required as a cofactor. Requires Mn(2+) as cofactor.

It carries out the reaction (S)-malate + NAD(+) = pyruvate + CO2 + NADH. It catalyses the reaction oxaloacetate + H(+) = pyruvate + CO2. This chain is NAD-dependent malic enzyme, found in Pseudomonas syringae pv. syringae (strain B728a).